The primary structure comprises 49 residues: Splenin (49 aa).

The 44-residue stretch at 4–47 folds into the LEM-like domain; sequence LEDPSVLTKEKLKSELVANNVTLPAGEQRKEVYVELYLQHLTAL. The segment at 32 to 36 is essential for biological activity; that stretch reads RKEVY.

Belongs to the thymopoietin family.

Hormone of the spleen with pleiotropic actions on prothymocytes, mature T-cells, the nicotinic acetylcholine receptor, and pituitary corticotrophs. This is Splenin (SP) from Bos taurus (Bovine).